The chain runs to 94 residues: DNA-directed RNA polymerase subunit omega (94 aa).

It belongs to the RNA polymerase subunit omega family. As to quaternary structure, the RNAP catalytic core consists of 2 alpha, 1 beta, 1 beta' and 1 omega subunit. When a sigma factor is associated with the core the holoenzyme is formed, which can initiate transcription.

It carries out the reaction RNA(n) + a ribonucleoside 5'-triphosphate = RNA(n+1) + diphosphate. In terms of biological role, promotes RNA polymerase assembly. Latches the N- and C-terminal regions of the beta' subunit thereby facilitating its interaction with the beta and alpha subunits. The sequence is that of DNA-directed RNA polymerase subunit omega from Tolumonas auensis (strain DSM 9187 / NBRC 110442 / TA 4).